A 1040-amino-acid polypeptide reads, in one-letter code: Multidrug resistance protein MdtB (1040 aa).

A run of 12 helical transmembrane segments spans residues 16–36, 347–367, 369–389, 396–416, 440–460, 472–492, 537–557, 863–883, 888–908, 911–931, 968–988, and 998–1018; these read FIMR…AGII, LMMA…NIPA, IIPG…MVFL, LTLM…IVVI, IGFT…PLLF, FAIT…TLTP, WLTL…WVFI, LGST…VLGI, FIHP…ALLA, IAGS…IGIV, ILMT…STGV, and IGMV…TPVI.

The protein belongs to the resistance-nodulation-cell division (RND) (TC 2.A.6) family. MdtB subfamily. In terms of assembly, part of a tripartite efflux system composed of MdtA, MdtB and MdtC. MdtB forms a heteromultimer with MdtC.

It is found in the cell inner membrane. In terms of biological role, the MdtABC tripartite complex confers resistance against novobiocin and deoxycholate. This is Multidrug resistance protein MdtB from Escherichia coli O139:H28 (strain E24377A / ETEC).